The primary structure comprises 270 residues: Peflin (270 aa).

The disordered stretch occupies residues Met-1–Val-97. Tandem repeats lie at residues Pro-22–Gly-30, Pro-44–Pro-54, Gly-62–Gly-70, Ala-72–Gly-81, and Pro-83–Gln-91. The segment at Pro-22–Gln-91 is 5 X 9 AA approximate tandem repeat of [AP]-P-G-G-P-Y-G-G-P-P. Low complexity-rich tracts occupy residues Pro-26–Gln-47 and Tyr-55–Pro-66. The segment covering Tyr-67–Gln-84 has biased composition (gly residues). EF-hand domains lie at Gly-100–Ser-135, Thr-141–Leu-169, Gln-170–Asn-202, Leu-203–Met-239, and Thr-240–Leu-269. 5 residues coordinate Ca(2+): Asp-113, Asp-115, Ser-117, Tyr-119, and Glu-124. Positions 180, 182, 184, 186, and 191 each coordinate Ca(2+).

As to quaternary structure, heterodimer; heterodimerizes (via the EF-hand 5) with pdcd6.

Its subcellular location is the cytoplasm. The protein localises to the endoplasmic reticulum. It is found in the membrane. It localises to the cytoplasmic vesicle. The protein resides in the COPII-coated vesicle membrane. Its function is as follows. Calcium-binding protein that acts as an adapter that bridges unrelated proteins or stabilizes weak protein-protein complexes in response to calcium. Acts as a negative regulator of ER-Golgi transport. This chain is Peflin, found in Danio rerio (Zebrafish).